A 333-amino-acid polypeptide reads, in one-letter code: MNLYRRYGWELTLAALLVLEILLFGLSNSRMLDINVLLFSTSDFICIGIVALPLTMVIVSGGIDISFGSTIGLCAIFLGIVFQAGVPMSVAIPLTVLVGALCGLINAGLILYTGVNPLVITLGTLYLFGGSALLLSGLSGATGYEGIGGFPAAFTDFANQTLFGLPIPLVIFMLCVLLFWLLMHRTHSGRHVFLIGQSSRVARYSALPIARTLCMLYAMTGVASAIAAILLVSYFGSARSDLGASFLMPAITAVVLGGANIYGGSGSILGTALAVLLVGYLQQGLQMIGTPNQISSALSGALLILVVVGRSISLHRHLIYEWLQRRRSRKASA.

10 helical membrane passes run 7–27 (YGWE…FGLS), 45–65 (ICIG…GIDI), 67–87 (FGST…AGVP), 90–110 (VAIP…AGLI), 118–138 (LVIT…LSGL), 162–182 (LFGL…FWLL), 212–232 (TLCM…ILLV), 240–260 (SDLG…GGAN), 261–281 (IYGG…VGYL), and 288–308 (IGTP…LVVV).

Belongs to the binding-protein-dependent transport system permease family. AraH/RbsC subfamily. As to quaternary structure, the complex is composed of two ATP-binding proteins (LsrA), two transmembrane proteins (LsrC and LsrD) and a solute-binding protein (LsrB).

It is found in the cell inner membrane. In terms of biological role, part of the ABC transporter complex LsrABCD involved in autoinducer 2 (AI-2) import. Probably responsible for the translocation of the substrate across the membrane. This is Autoinducer 2 import system permease protein LsrD (lsrD) from Yersinia pseudotuberculosis serotype I (strain IP32953).